The chain runs to 320 residues: Aristolochene synthase (320 aa).

Polar residues predominate over residues 1–14 (MKKPNGTNGASSSL). Positions 1 to 20 (MKKPNGTNGASSSLEPPPST) are disordered. Residues D90, N219, S223, and E227 each coordinate Mg(2+). (2E,6E)-farnesyl diphosphate is bound by residues R314 and Y315.

It belongs to the terpene synthase family. Homodimer. The cofactor is Mg(2+).

The enzyme catalyses (2E,6E)-farnesyl diphosphate = (+)-aristolochene + diphosphate. It participates in sesquiterpene biosynthesis; aristolochene biosynthesis; aristolochene from farnesyl diphosphate: step 1/1. In terms of biological role, catalyzes the cyclization of trans,trans-farnesyl diphosphate (FPP) to the bicyclic sesquiterpene aristolochene. Produces germacrene A as an enzyme-bound intermediate that is not released by the enzyme, but is further cyclized to produce aristolochene. Aristolochene is the likely parent compound for a number of sesquiterpenoid toxins produced by filamentous fungi. The chain is Aristolochene synthase (Ari1) from Aspergillus terreus.